Here is a 426-residue protein sequence, read N- to C-terminus: MDDSFDIYEIKARQVLDSRGNPTVEAEVLTAGGGYGHTIVPSGASTGTFEAVELRDKKEKYGGKSVLNAVSNVNDIIAQELIGEDARNQRLIDQIMLNLDGTENKGNLGANAILAVSLAVAKAAADTASLPLYKYIGGSNAYVMPAPMMNVLNGGQHAGNALDFQEFMIMPVGADSFAEAVRMCSETYQSLKKVVAEKYGKDAVNVGDEGGFAPPVKTIDEALAVLLEGVKKAGYEDEIVFTIDSAASEFYDEKSGSYMIAGEKVSTDKLIDIYKEMVEQYPIVSIEDPLFEEDFEGFKTATKELKGIQIVGDDLFVTNTKRLKKGIEMGAANSLLLKVNQIGTLSESIDAANMAFRNGYSLVVSHRSGESEDSTIADLAVALNAGQIKTGAPARGERTAKYNQLMRIEEELQISKYAGKDFKIPF.

A (2R)-2-phosphoglycerate-binding site is contributed by Gln-165. The active-site Proton donor is the Glu-209. Asp-244, Glu-287, and Asp-313 together coordinate Mg(2+). (2R)-2-phosphoglycerate is bound by residues Lys-338, Arg-367, Ser-368, and Lys-389. The active-site Proton acceptor is Lys-338.

It belongs to the enolase family. Mg(2+) serves as cofactor.

It localises to the cytoplasm. It is found in the secreted. Its subcellular location is the cell surface. The enzyme catalyses (2R)-2-phosphoglycerate = phosphoenolpyruvate + H2O. It participates in carbohydrate degradation; glycolysis; pyruvate from D-glyceraldehyde 3-phosphate: step 4/5. Functionally, catalyzes the reversible conversion of 2-phosphoglycerate (2-PG) into phosphoenolpyruvate (PEP). It is essential for the degradation of carbohydrates via glycolysis. This is Enolase from Methanococcus maripaludis (strain DSM 14266 / JCM 13030 / NBRC 101832 / S2 / LL).